Consider the following 216-residue polypeptide: Methylthioribulose-1-phosphate dehydratase (216 aa).

Zn(2+)-binding residues include H101 and H103.

It belongs to the aldolase class II family. MtnB subfamily. Requires Zn(2+) as cofactor.

The enzyme catalyses 5-(methylsulfanyl)-D-ribulose 1-phosphate = 5-methylsulfanyl-2,3-dioxopentyl phosphate + H2O. Its pathway is amino-acid biosynthesis; L-methionine biosynthesis via salvage pathway; L-methionine from S-methyl-5-thio-alpha-D-ribose 1-phosphate: step 2/6. Its function is as follows. Catalyzes the dehydration of methylthioribulose-1-phosphate (MTRu-1-P) into 2,3-diketo-5-methylthiopentyl-1-phosphate (DK-MTP-1-P). This Bradyrhizobium sp. (strain BTAi1 / ATCC BAA-1182) protein is Methylthioribulose-1-phosphate dehydratase.